The following is a 1832-amino-acid chain: Putative transcription factor capicua (1832 aa).

Residues S41 and S49 each carry the phosphoserine modification. Disordered stretches follow at residues 66–121 (ANQS…EVGS), 135–227 (STVG…AHPH), 323–353 (QQQQQHQQLQQQQQLQQQQQSPPQMPLNHNN), 389–427 (NQRQKQQQEEPDDQLDDDVFETTTPGISANSKKQTAAMR), 444–493 (DGAA…IRRP), 563–619 (DRRK…GGQG), 690–739 (RERV…SGGE), 784–845 (QPTG…VSAP), 874–938 (PMHH…EDDE), 1069–1105 (TSTLSSSSSNPANNEAPNKFSNFPTQHQPTTTTTISC), 1151–1178 (GQDEEEEEDEGNAEKQENPKVAGKEQVT), 1457–1602 (DGGM…STAA), 1632–1668 (QPEDCQSPSAIAVPSSPRVYGTNYRKKNTAPPPVQKL), 1701–1733 (LESSDQTGRSPRTPKTPLQSARSDASEKGHRKV), and 1789–1817 (ASCTPHSAGPNTPSDSNSSSTTLSASSTS). Low complexity predominate over residues 96-121 (NANNNSSNNNTSSSNNNNNSNWEVGS). Residues 172 to 186 (PPPPPPASLPAPSAP) are compositionally biased toward pro residues. Composition is skewed to low complexity over residues 187 to 203 (PTSGSSSSHNSVGHATS), 211 to 223 (QQQHQQQQQHQQQ), and 323 to 342 (QQQQQHQQLQQQQQLQQQQQ). Positions 397-408 (EEPDDQLDDDVF) are enriched in acidic residues. Over residues 409 to 422 (ETTTPGISANSKKQ) the composition is skewed to polar residues. Low complexity predominate over residues 446–484 (AAGAPATSAAKRRSQSLSALQQQQQQQQQAGAAGTAAGQ). Positions 490 to 558 (IRRPMNAFMI…AHFKLHPEWK (69 aa)) form a DNA-binding region, HMG box. Gly residues predominate over residues 610–619 (GGSGSCGGQG). The tract at residues 834-1832 (GSASGGGVVS…TSAADVFQYY (999 aa)) is interaction with gro. Residues 903-914 (ESSEKDKPALDD) are compositionally biased toward basic and acidic residues. Residues 915–938 (QERDEVEEEDEDEEDDDEDDEDDE) show a composition bias toward acidic residues. Residues 1078–1091 (NPANNEAPNKFSNF) show a composition bias toward polar residues. The segment covering 1092–1105 (PTQHQPTTTTTISC) has biased composition (low complexity). Low complexity predominate over residues 1462–1471 (GCASAAASGG). Residues 1503–1525 (LSQSKSESNVSFGANLGASNGQH) are compositionally biased toward polar residues. Residues 1547 to 1589 (NSSNLSSALPTPTSSTTTPNSDEQLPLTPTTSSSNSNLNQQQP) are compositionally biased toward low complexity. T1716 carries the post-translational modification Phosphothreonine. The span at 1724 to 1733 (DASEKGHRKV) shows a compositional bias: basic and acidic residues. A compositionally biased stretch (polar residues) spans 1789–1799 (ASCTPHSAGPN). Positions 1800-1817 (TPSDSNSSSTTLSASSTS) are enriched in low complexity.

As to quaternary structure, interacts with gro. Expressed in the central region of embryos. Also expressed in ovarian follicle cells, the wing imaginal disks and the wing pouch.

The protein resides in the nucleus. Its function is as follows. Transcriptional repressor required for the specification of numerous cell types during embryonic development. Required for terminal patterning of early embryos. May associate with gro to repress tll and hkb, restricting their expression to embryonic terminal poles where they initiate correct development of head and tail structures. Required for dorsoventral patterning of oocytes and early embryos. Cooperates with dl to repress zen and other dorsal specific genes within the embryo and promotes expression of the ventralizing factor pip in ovarian follicle cells. Required during wing development for the specification of intervein areas, where it mediates localized repression of vein specific genes such as aos, dpp and vvl. This is Putative transcription factor capicua (cic) from Drosophila melanogaster (Fruit fly).